A 1113-amino-acid polypeptide reads, in one-letter code: MNEEFEGDVPMSDPFLSLVTKLDDIAPFPNNDPLDFDMEHNWQEPGPSQQPDPSIPGNQHSPPQEYYDIDGQRDVSTLHSLLNHNNDDFFSMRFSPPNFDLGGGRGPSLAATQQLSGEGPASMLNPLQTSPPSGGYPPADAYRPLSLAQQLAAPAMTPHQAASLFVNTNGIDQKNFTHAMLSPPHHTSMTPQPYTEAMEHINGYMSPYDQAQGPSGPSYYSQHHQSPPPHHHHHHPMPKIHENPEQVASPSIEDAPETKPTHLVEPQSPKSPQNMKEELLRLLVNMSPSEVERLKNKKSGACSATNGPSRSKEKAAKIVIQETAEGDEDEDDEDSDSGETMSQGTTIIVRRPKTERRTAHNLIEKKYRCSINDRIQQLKVLLCGDEAKLSKSATLRRAIEHIEEVEHENQVLKHHVEQMRKTLQNNRLPYPEPIQYTEYSARSPVESSPSPPRNERKRSRMSTTTPMKNGTRDGSSKVTLFAMLLAVLIFNPIGLLAGSAIFSKAAAEAPIASPFEHGRVIDDPDGTSTRTLFWEGSIINMSYVWVFNILMIIYVVVKLLIHGDPVQDFMSVSWQTFVTTREKARAELNSGNLKDAQRKFCECLATLDRSLPSPGVDSVFSVGWECVRHLLNWLWIGRYIARRRRSTTKPVSVVCRSHAQTAVLYHEIHQLHLMGITGNFEDTYEPSALTGLFMSLCAVNLAEAAGASNDGLPRAVMAQIYISASIQCRLALPNLLAPFFSGYFLRRARRHVRRAPEHSVSHLLWIFHPATRKFMSDAKRLEHVLSSKQKQLRFGSFVEDEQLSPLARIRTTLKVYLLSKLVQELVGGDEIFTKNVERILNDNDRLDDEVDVVDVSRLLVTISTQCAAILTNEKDESAKFGTWISRNGDACCTWWTHVLTCGIYWRSNKNELARQHYSLIRNCPPKILTDNLGLAVGHALCARKICIDDRDSPKVSQYVCIHTKKSLESLRLFSTSSRASGVVSGIQEGTRRMAYEWIMNSLLDAWRSNLFASKPYWTQSFKGQSTFSTLYQEAYNHYAIINGTRGDCWRLFVYELTCRMLNGANPQATWSGVRRVRSTKMDAVRGRVSMRRSAQPDAFHLHTLVKLHTSMDL.

Positions 1–52 are transcriptional activation (acidic); it reads MNEEFEGDVPMSDPFLSLVTKLDDIAPFPNNDPLDFDMEHNWQEPGPSQQPD. Disordered stretches follow at residues 24 to 68, 101 to 132, 206 to 274, and 290 to 345; these read DIAP…EYYD, LGGG…TSPP, SPYD…SPQN, and EVER…SQGT. Over residues 229–238 the composition is skewed to basic residues; the sequence is PHHHHHHPMP. Over residues 324 to 337 the composition is skewed to acidic residues; that stretch reads AEGDEDEDDEDSDS. Residues 355–368 form a basic motif region; that stretch reads ERRTAHNLIEKKYR. Residues 355–405 enclose the bHLH domain; sequence ERRTAHNLIEKKYRCSINDRIQQLKVLLCGDEAKLSKSATLRRAIEHIEEV. A helix-loop-helix motif region spans residues 369–405; the sequence is CSINDRIQQLKVLLCGDEAKLSKSATLRRAIEHIEEV. Residues 395-422 are a coiled coil; that stretch reads LRRAIEHIEEVEHENQVLKHHVEQMRKT. Residues 437–472 form a disordered region; that stretch reads TEYSARSPVESSPSPPRNERKRSRMSTTTPMKNGTR. 2 helical membrane passes run 478-498 and 541-561; these read VTLF…LLAG and MSYV…KLLI.

Processed in the Golgi apparatus, releasing the protein from the membrane. Post-translationally, ubiquitinated; the nuclear form has a rapid turnover and is rapidly ubiquitinated and degraded by the proteasome in the nucleus. Broadly expressed, including many cells in the head. Expressed in the intestine.

The protein resides in the nucleus. The protein localises to the endoplasmic reticulum membrane. Functionally, transcription factor involved in maintaining normal fat levels. Regulates the expression of genes involved in lipid metabolism in response to nutrient availability, such as the fatty-acid desaturases fat-5, fat-6 and fat-7. In response to a high-glucose diet, promotes fatty acid synthesis, elongation and desaturation, acting in concert with transcription factor mxl-3. Plays a role in synthesis of monomethyl branched-chain fatty acids (mmBCFAs) as well as other very-long-chain fatty acids. Downstream of the cis-Golgi membrane protein eas-1/GOLT1B and the E3 ubiquitin ligase rnf-145/RNF145, plays a role in the regulation of glial size, perhaps by modulating synthesis of long-chain polyunsaturated fatty-acids (LC-PUFA). Modulates expression of genes in the one-carbon cycle, which produces the methyl donor S-adenosylmethionine (SAM). Probably involved in a feedback loop in which decreased levels of SAM lead to increased transcriptional activity of sbp-1, thereby causing lipid accumulation. Involved in the negative regulation of zinc homeostasis. Involved in the response to simulated microgravity, in concert with Mediator complex subunit mdt-15, probably acting in the intestine. Plays a role in transgenerational lipid accumulation in response to a high-fat diet, probably acting by upregulating wdr-5.1 expression to increase the level of trimethylated 'Lys-4' histone H3 (H3K4me3), which may then induce the expression of fat-5, fat-6 and fat-7. May act as an oxygen sensor for lipid metabolism. Its function is as follows. Precursor of the transcription factor form, which is embedded in the endoplasmic reticulum membrane. Processing of this form allows release of the transcription factor form that translocates into the nucleus and activates transcription of genes involved in sterol biosynthesis and lipid homeostasis. In terms of biological role, key transcription factor that regulates expression of genes involved in sterol biosynthesis and lipid homeostasis. The polypeptide is Sterol regulatory element binding protein sbp-1 (Caenorhabditis elegans).